The sequence spans 483 residues: Cysteine--tRNA ligase (483 aa).

Residue Cys27 coordinates Zn(2+). Residues 29 to 39 (ITAYDYCHIGH) carry the 'HIGH' region motif. Residues Cys208, His231, and Glu235 each contribute to the Zn(2+) site. The 'KMSKS' region signature appears at 263–267 (KMSKS). Lys266 provides a ligand contact to ATP.

It belongs to the class-I aminoacyl-tRNA synthetase family. Monomer. Requires Zn(2+) as cofactor.

The protein resides in the cytoplasm. It catalyses the reaction tRNA(Cys) + L-cysteine + ATP = L-cysteinyl-tRNA(Cys) + AMP + diphosphate. The chain is Cysteine--tRNA ligase from Desulfovibrio desulfuricans (strain ATCC 27774 / DSM 6949 / MB).